The following is a 413-amino-acid chain: Ras association domain-containing protein 5 (413 aa).

The segment at 1-103 is disordered; the sequence is MASPAIGQRP…RPRDVRSIFE (103 aa). Basic and acidic residues predominate over residues 52-74; it reads SEDRGGRRSGRRDPEPTPRDCRH. The Phorbol-ester/DAG-type zinc finger occupies 117–165; that stretch reads GHRFVELALRGGPGWCDLCGREVLRQALRCANCKFTCHSECRSLIQLDC. Residues serine 177 and serine 274 each carry the phosphoserine modification. Positions 265 to 359 constitute a Ras-associating domain; it reads PAATTDKRTS…LSFVLKENET (95 aa). Threonine 347 carries the phosphothreonine modification. An SARAH domain is found at 361–408; sequence EVEWDAFSIPELQNFLTILEKEEQDKIHQLQKKYNKFRQKLEEALRES.

In terms of assembly, interacts directly with activated HRAS; a RASSF5-STK4/MST1 complex probably associates with activated HRAS. Interacts with KRAS. Probably interacts with Ras-like GTPases RRAS, MRAS, RAP1B, RAP2A and RALA. Interacts with RRAS2. Can self-associate. Interacts with RSSF1 isoform A. The RSSF1 isoform A-RSSF5 heterodimer probably mediates the association of RSSF1 with HRAS. Isoform 2 interacts with activated RAP1A and ITGAL/LFA-1. Binds STK4/MST1, inhibiting STK4/MST1 autoactivation.

Its subcellular location is the cytoplasm. The protein resides in the cytoskeleton. Its function is as follows. Potential tumor suppressor. Seems to be involved in lymphocyte adhesion by linking RAP1A activation upon T-cell receptor or chemokine stimulation to integrin activation. Isoform 2 stimulates lymphocyte polarization and the patch-like distribution of ITGAL/LFA-1, resulting in an enhanced adhesion to ICAM1. Together with RAP1A may participate in regulation of microtubule growth. The association of isoform 2 with activated RAP1A is required for directional movement of endothelial cells during wound healing. May be involved in regulation of Ras apoptotic function. The RASSF5-STK4/MST1 complex may mediate HRAS and KRAS induced apoptosis. The chain is Ras association domain-containing protein 5 (Rassf5) from Mus musculus (Mouse).